The chain runs to 232 residues: CD302 antigen (232 aa).

Positions 1-22 are cleaved as a signal peptide; sequence MPRAAPPALLLPLLGLAAAAAA. The Extracellular segment spans residues 23–168; the sequence is DCPSSTWVQF…YEKKYLSDNR (146 aa). The region spanning 32–152 is the C-type lectin domain; it reads FQDSCYIFLQ…CEVSSVEGTL (121 aa). Asn109 is a glycosylation site (N-linked (GlcNAc...) asparagine). Cys128 and Cys143 are disulfide-bonded. Residues 169–189 traverse the membrane as a helical segment; the sequence is ILISALVIASTVILTVLGAVV. The Cytoplasmic portion of the chain corresponds to 190–232; sequence WFLYKRSLDSGFTTVFSAAHQSPYNDDCVLVVAEENEYDIQFN.

Its subcellular location is the membrane. The protein resides in the cell projection. It is found in the filopodium. The protein localises to the cytoplasm. It localises to the cell cortex. Its subcellular location is the microvillus. Its function is as follows. Potential multifunctional C-type lectin receptor that may play roles in endocytosis and phagocytosis as well as in cell adhesion and migration. The polypeptide is CD302 antigen (Bos taurus (Bovine)).